A 725-amino-acid chain; its full sequence is Polyribonucleotide nucleotidyltransferase (725 aa).

Mg(2+) is bound by residues aspartate 488 and aspartate 494. In terms of domain architecture, KH spans 555–614 (PRMITMKIHPDKIREVIGKGGSTIQALTKETGTTIDIQEDGTITIASTSTDGMAEAKRRI). Residues 624–692 (GKIYAGTVLK…EKGRLRLSLK (69 aa)) enclose the S1 motif domain. Residues 702–725 (ISPIAQGDAPAAAPAAPASPDQQQ) form a disordered region. Residues 706–725 (AQGDAPAAAPAAPASPDQQQ) are compositionally biased toward low complexity.

It belongs to the polyribonucleotide nucleotidyltransferase family. The cofactor is Mg(2+).

The protein resides in the cytoplasm. It catalyses the reaction RNA(n+1) + phosphate = RNA(n) + a ribonucleoside 5'-diphosphate. Involved in mRNA degradation. Catalyzes the phosphorolysis of single-stranded polyribonucleotides processively in the 3'- to 5'-direction. In Cupriavidus metallidurans (strain ATCC 43123 / DSM 2839 / NBRC 102507 / CH34) (Ralstonia metallidurans), this protein is Polyribonucleotide nucleotidyltransferase.